The chain runs to 124 residues: Fluoride-specific ion channel FluC (124 aa).

Helical transmembrane passes span 4–24 (LLLVALGGSIGAVFRYLISIF), 35–55 (FGTLLVNVLGSFLMGVIYALG), 60–80 (ISPEFKALIGVGLLGALTTFS), and 102–122 (VVLNLSLCLFMVYLGQQLVFS). Positions 74 and 77 each coordinate Na(+).

This sequence belongs to the fluoride channel Fluc/FEX (TC 1.A.43) family.

The protein resides in the cell inner membrane. The enzyme catalyses fluoride(in) = fluoride(out). Na(+) is not transported, but it plays an essential structural role and its presence is essential for fluoride channel function. Functionally, fluoride-specific ion channel. Important for reducing fluoride concentration in the cell, thus reducing its toxicity. This Shewanella oneidensis (strain ATCC 700550 / JCM 31522 / CIP 106686 / LMG 19005 / NCIMB 14063 / MR-1) protein is Fluoride-specific ion channel FluC.